The sequence spans 417 residues: Probable uracil permease (417 aa).

Over 1-13 the chain is Cytoplasmic; the sequence is MTNQNPPVLLEQN. Residues 14 to 37 form a helical membrane-spanning segment; the sequence is HAKQAFVGLQMLFVAFGALVLVPL. Residues 38-41 are Periplasmic-facing; it reads ITGL. A helical transmembrane segment spans residues 42–61; the sequence is NANTALLTAGIGTLLFQLCT. Residues 62–64 lie on the Cytoplasmic side of the membrane; the sequence is GRQ. A discontinuously helical membrane pass occupies residues 65 to 81; that stretch reads VPIFLASSFAFIAPIQY. Residue Phe-73 participates in uracil binding. The Periplasmic portion of the chain corresponds to 83–90; that stretch reads VTTWGIAT. The chain crosses the membrane as a helical span at residues 91 to 111; it reads TMGGLVFTGLVYFALSTLVKI. Over 112–123 the chain is Cytoplasmic; that stretch reads KGAGALQKVFPP. A helical membrane pass occupies residues 124–145; sequence VVVGPVIIIIGMGLAPVAVDMA. Over 146–154 the chain is Periplasmic; that stretch reads LGKNSTYQY. A helical transmembrane segment spans residues 155–170; it reads NDAVFVSMATLLTTLG. At 171–177 the chain is on the cytoplasmic side; sequence VAVFAKG. The helical transmembrane segment at 178–198 threads the bilayer; it reads MMKLIPIMFGIVVGYILCLFL. Over 199–223 the chain is Periplasmic; the sequence is GLINFQPVIDAPWFSVPEITTPEFK. Residues 224-247 form a helical membrane-spanning segment; that stretch reads LEAILYLLPIAIAPAVEHVGGIMA. Glu-240 provides a ligand contact to uracil. Residues 248–260 lie on the Cytoplasmic side of the membrane; sequence ISSVTGKDFLQKP. The chain crosses the membrane as a helical span at residues 261 to 280; it reads GLHRTLLGDGIATSAASFLG. A discontinuously helical membrane pass occupies residues 281 to 297; it reads GPPNTTYAEVTGAVMLT. Residue Glu-289 participates in uracil binding. Over 298–300 the chain is Cytoplasmic; the sequence is RNF. A helical membrane pass occupies residues 301–318; that stretch reads NPKIMTWAAVWAIAISFC. The Periplasmic segment spans residues 319-331; the sequence is GKVGAFLSTIPTI. A helical transmembrane segment spans residues 332–353; the sequence is VMGGIMMLVFGSIAVVGMSTLI. Residues 354-364 lie on the Cytoplasmic side of the membrane; the sequence is RGKVDVTEARN. An intramembrane region (discontinuously helical) is located at residues 365 to 400; the sequence is LCIISVVMTFGIGGMFVNFGEVSLKGISLCAVVAIL. The Cytoplasmic portion of the chain corresponds to 401–416; sequence LNLILPKAKNTPIEEN.

Belongs to the nucleobase:cation symporter-2 (NCS2) (TC 2.A.40) family.

It localises to the cell inner membrane. It carries out the reaction uracil(in) + H(+)(in) = uracil(out) + H(+)(out). In terms of biological role, transport of uracil in the cell. This is Probable uracil permease (uraA) from Pasteurella multocida (strain Pm70).